We begin with the raw amino-acid sequence, 186 residues long: dCTP deaminase (186 aa).

107–112 (KSTYAR) provides a ligand contact to dCTP. Glu133 serves as the catalytic Proton donor/acceptor. Gln152, Tyr166, Lys175, and Gln176 together coordinate dCTP.

This sequence belongs to the dCTP deaminase family. Homotrimer.

It carries out the reaction dCTP + H2O + H(+) = dUTP + NH4(+). It functions in the pathway pyrimidine metabolism; dUMP biosynthesis; dUMP from dCTP (dUTP route): step 1/2. Functionally, catalyzes the deamination of dCTP to dUTP. This chain is dCTP deaminase, found in Wolinella succinogenes (strain ATCC 29543 / DSM 1740 / CCUG 13145 / JCM 31913 / LMG 7466 / NCTC 11488 / FDC 602W) (Vibrio succinogenes).